The sequence spans 350 residues: Ion-translocating oxidoreductase complex subunit D (350 aa).

Helical transmembrane passes span 37–57 (YFFG…ALTA), 68–88 (AVLS…IGVA), 89–109 (IPPI…IVLV), and 120–140 (IFNP…VQMT). T185 is modified (FMN phosphoryl threonine). 5 helical membrane passes run 212-232 (GYGV…LIML), 239-259 (WHIS…GYLL), 265-285 (VGPL…FIAT), 291-311 (ATSV…VYVI), and 315-335 (GGYP…APFI).

This sequence belongs to the NqrB/RnfD family. The complex is composed of six subunits: RnfA, RnfB, RnfC, RnfD, RnfE and RnfG. FMN serves as cofactor.

Its subcellular location is the cell inner membrane. Part of a membrane-bound complex that couples electron transfer with translocation of ions across the membrane. The protein is Ion-translocating oxidoreductase complex subunit D of Shewanella pealeana (strain ATCC 700345 / ANG-SQ1).